The chain runs to 187 residues: Elongation factor P (187 aa).

Belongs to the elongation factor P family.

It localises to the cytoplasm. It participates in protein biosynthesis; polypeptide chain elongation. Functionally, involved in peptide bond synthesis. Stimulates efficient translation and peptide-bond synthesis on native or reconstituted 70S ribosomes in vitro. Probably functions indirectly by altering the affinity of the ribosome for aminoacyl-tRNA, thus increasing their reactivity as acceptors for peptidyl transferase. This is Elongation factor P from Erythrobacter litoralis (strain HTCC2594).